The primary structure comprises 1059 residues: Putative ATP-dependent RNA helicase BoYb (1059 aa).

The Q motif signature appears at 54-82 (RRFAEVSLLPDILETMRNLGLNRLLRLQS). The 198-residue stretch at 87–284 (HLAGGSGHGA…RAVNDKPALV (198 aa)) folds into the Helicase ATP-binding domain. 100-107 (GSPASGRT) serves as a coordination point for ATP. The short motif at 230–233 (DDVD) is the DEAD box element. One can recognise a Tudor domain in the interval 575-639 (PPVAGAICMY…GKLFECPEAL (65 aa)). A disordered region spans residues 756-787 (VQDSKEKANSKPHEKMKGKMTDQPAKLQSQPP). Positions 757–775 (QDSKEKANSKPHEKMKGKM) are enriched in basic and acidic residues.

Its subcellular location is the cytoplasm. It carries out the reaction ATP + H2O = ADP + phosphate + H(+). Its function is as follows. Involved in primary piRNA biogenesis in germline cells. This chain is Putative ATP-dependent RNA helicase BoYb (BoYb), found in Drosophila melanogaster (Fruit fly).